Reading from the N-terminus, the 452-residue chain is Chromosomal replication initiator protein DnaA (452 aa).

Positions Met-1–Thr-73 are domain I, interacts with DnaA modulators. Residues Thr-73–Gly-102 are domain II. A domain III, AAA+ region region spans residues Asn-103 to Ala-323. Residues Gly-147, Gly-149, Lys-150, and Thr-151 each coordinate ATP. The tract at residues Gln-324–Lys-452 is domain IV, binds dsDNA.

Belongs to the DnaA family. In terms of assembly, oligomerizes as a right-handed, spiral filament on DNA at oriC.

It is found in the cytoplasm. In terms of biological role, plays an essential role in the initiation and regulation of chromosomal replication. ATP-DnaA binds to the origin of replication (oriC) to initiate formation of the DNA replication initiation complex once per cell cycle. Binds the DnaA box (a 9 base pair repeat at the origin) and separates the double-stranded (ds)DNA. Forms a right-handed helical filament on oriC DNA; dsDNA binds to the exterior of the filament while single-stranded (ss)DNA is stabiized in the filament's interior. The ATP-DnaA-oriC complex binds and stabilizes one strand of the AT-rich DNA unwinding element (DUE), permitting loading of DNA polymerase. After initiation quickly degrades to an ADP-DnaA complex that is not apt for DNA replication. Binds acidic phospholipids. In Acholeplasma laidlawii (strain PG-8A), this protein is Chromosomal replication initiator protein DnaA.